The primary structure comprises 360 residues: Chorismate synthase (360 aa).

Positions 48 and 54 each coordinate NADP(+). Residues 125 to 127 (RSS), 246 to 247 (NA), G286, 301 to 305 (KPTSS), and R327 each bind FMN.

The protein belongs to the chorismate synthase family. In terms of assembly, homotetramer. The cofactor is FMNH2.

It carries out the reaction 5-O-(1-carboxyvinyl)-3-phosphoshikimate = chorismate + phosphate. Its pathway is metabolic intermediate biosynthesis; chorismate biosynthesis; chorismate from D-erythrose 4-phosphate and phosphoenolpyruvate: step 7/7. Catalyzes the anti-1,4-elimination of the C-3 phosphate and the C-6 proR hydrogen from 5-enolpyruvylshikimate-3-phosphate (EPSP) to yield chorismate, which is the branch point compound that serves as the starting substrate for the three terminal pathways of aromatic amino acid biosynthesis. This reaction introduces a second double bond into the aromatic ring system. In Actinobacillus pleuropneumoniae serotype 7 (strain AP76), this protein is Chorismate synthase.